The following is a 249-amino-acid chain: Type III pantothenate kinase (249 aa).

6–13 serves as a coordination point for ATP; that stretch reads DCGNSFIK. Residues Y93 and 100–103 each bind substrate; that span reads GLDR. D102 acts as the Proton acceptor in catalysis. Residue D122 coordinates K(+). Residue T125 coordinates ATP. T181 contributes to the substrate binding site.

Belongs to the type III pantothenate kinase family. In terms of assembly, homodimer. The cofactor is NH4(+). K(+) serves as cofactor.

The protein localises to the cytoplasm. It catalyses the reaction (R)-pantothenate + ATP = (R)-4'-phosphopantothenate + ADP + H(+). The protein operates within cofactor biosynthesis; coenzyme A biosynthesis; CoA from (R)-pantothenate: step 1/5. Functionally, catalyzes the phosphorylation of pantothenate (Pan), the first step in CoA biosynthesis. The sequence is that of Type III pantothenate kinase from Pseudomonas syringae pv. syringae (strain B728a).